Here is a 407-residue protein sequence, read N- to C-terminus: Na(+)-translocating NADH-quinone reductase subunit F (407 aa).

The helical transmembrane segment at 3 to 23 (IILGVVMFTLIVLVLSGLILA) threads the bilayer. The 2Fe-2S ferredoxin-type domain occupies 32–126 (GDVVIEINNE…NMKIELPEEI (95 aa)). [2Fe-2S] cluster-binding residues include C69, C75, C78, and C110. An FAD-binding FR-type domain is found at 129-269 (VKKWECEVIS…SGPFGEFFAK (141 aa)).

It belongs to the NqrF family. As to quaternary structure, composed of six subunits; NqrA, NqrB, NqrC, NqrD, NqrE and NqrF. It depends on [2Fe-2S] cluster as a cofactor. The cofactor is FAD.

It localises to the cell inner membrane. It catalyses the reaction a ubiquinone + n Na(+)(in) + NADH + H(+) = a ubiquinol + n Na(+)(out) + NAD(+). Functionally, NQR complex catalyzes the reduction of ubiquinone-1 to ubiquinol by two successive reactions, coupled with the transport of Na(+) ions from the cytoplasm to the periplasm. The first step is catalyzed by NqrF, which accepts electrons from NADH and reduces ubiquinone-1 to ubisemiquinone by a one-electron transfer pathway. This is Na(+)-translocating NADH-quinone reductase subunit F from Klebsiella pneumoniae subsp. pneumoniae (strain ATCC 700721 / MGH 78578).